An 80-amino-acid chain; its full sequence is Styelin-C (80 aa).

A signal peptide spans 1-22 (MQMKATILIVLVALFMIQQSEA). The residue at position 24 (Trp-24) is a 6'-bromotryptophan. Leu-53 is subject to Leucine amide. Residues 55–80 (DMTDEEFQEFMQDIEQAREEELLSRQ) constitute a propeptide, removed in mature form.

It localises to the secreted. Its function is as follows. Bactericidal against several Gram-positive and Gram-negative bacteria. The chain is Styelin-C from Styela clava (Sea squirt).